We begin with the raw amino-acid sequence, 304 residues long: Protease HtpX homolog (304 aa).

The next 2 membrane-spanning stretches (helical) occupy residues 19 to 39 (FIVF…VSYF) and 41 to 61 (LGEI…YYAY). A Zn(2+)-binding site is contributed by H146. The active site involves E147. H150 is a binding site for Zn(2+). The next 2 helical transmembrane spans lie at 156-176 (VRLQ…GDGL) and 192-212 (NILG…ATLL). E221 is a binding site for Zn(2+).

This sequence belongs to the peptidase M48B family. The cofactor is Zn(2+).

It is found in the cell inner membrane. In Dictyoglomus turgidum (strain DSM 6724 / Z-1310), this protein is Protease HtpX homolog.